The following is a 395-amino-acid chain: D-alanine--D-alanine ligase (395 aa).

In terms of domain architecture, ATP-grasp spans 172–391 (KVVLDAAGIP…YTELITRLIE (220 aa)). 204-266 (DAGLTYPLFV…EQGIDGREIE (63 aa)) contacts ATP. Mg(2+) is bound by residues Asp345, Glu358, and Asn360.

The protein belongs to the D-alanine--D-alanine ligase family. It depends on Mg(2+) as a cofactor. The cofactor is Mn(2+).

Its subcellular location is the cytoplasm. It carries out the reaction 2 D-alanine + ATP = D-alanyl-D-alanine + ADP + phosphate + H(+). It participates in cell wall biogenesis; peptidoglycan biosynthesis. Functionally, cell wall formation. In Bifidobacterium longum (strain DJO10A), this protein is D-alanine--D-alanine ligase.